Reading from the N-terminus, the 402-residue chain is Multidrug resistance protein MdtH (402 aa).

Residues 1–12 (MSRVSQARNLGK) lie on the Cytoplasmic side of the membrane. A helical transmembrane segment spans residues 13–33 (YFLLIDNMLVVLGFFVVFPLI). The Periplasmic segment spans residues 34–98 (SIRFVDQMGW…GFATMGIAHE (65 aa)). Residues 99 to 116 (PWLLWFSCLLSGLGGTLF) form a helical membrane-spanning segment. Residues 117-138 (DPPRSALVVKLIRPQQRGRFFS) are Cytoplasmic-facing. A helical membrane pass occupies residues 139–159 (LLMMQDSASAVIGALLGSWLL). Over 160–164 (QYDFR) the chain is Periplasmic. Residues 165 to 185 (LVCATGAVLFVLCAAFNAWLL) traverse the membrane as a helical segment. At 186-213 (PAWKLSTVRTPVREGMTRVMRDKRFVTY) the chain is on the cytoplasmic side. A helical membrane pass occupies residues 214-234 (VLTLAGYYMLAVQVMLMLPIM). Over 235 to 243 (VNDVAGAPS) the chain is Periplasmic. A helical membrane pass occupies residues 244 to 264 (AVKWMYAIEACLSLTLLYPIA). Over 265 to 276 (RWSEKHFRLEHR) the chain is Cytoplasmic. Residues 277–297 (LMAGLLIMSLSMMPVGMVSGL) form a helical membrane-spanning segment. Residues 298-299 (QQ) lie on the Periplasmic side of the membrane. A helical membrane pass occupies residues 300 to 320 (LFTLICLFYIGSIIAEPARET). The Cytoplasmic portion of the chain corresponds to 321–339 (LSASLADARARGSYMGFSR). Residues 340 to 360 (LGLAIGGAIGYIGGGWLFDLG) traverse the membrane as a helical segment. Topologically, residues 361–367 (KSAHQPE) are periplasmic. The helical transmembrane segment at 368–388 (LPWMMLGIIGIFTFLALGWQF) threads the bilayer. Over 389-402 (SQKRAARRLLERDA) the chain is Cytoplasmic.

It belongs to the major facilitator superfamily. DHA1 family. MdtH (TC 2.A.1.2.21) subfamily.

It is found in the cell inner membrane. The protein is Multidrug resistance protein MdtH of Shigella flexneri.